The chain runs to 448 residues: MGKYFGTDGVRGVANKELTPELAFKIGRFGGYVLTKDTDRPKVIIGRDTRVSGHMLEGALVAGLLSTGAEVMRLGVISTPGVAYLTKALDAQAGVMISASHNPVQDNGIKFFGSDGFKLTDEQEAEIEALLDKEVDELPRPTGTNLGQVSDYFEGGQKYLQYIKQTVEEDFSGLHIALDCAHGATSSLAPYLFADLEADISTMGTSPNGMNINEGVGSTHPEGLAELVKEKGADIGLAFDGDGDRLIAVDEKGNIVDGDQIMFICAKYMKETGQLKHNTVVSTVMSNLGFYKALEANNITSDKTAVGDRYVMEEMKRGGYNLGGEQSGHIILLDYITTGDGMLSALQLVNIMKMTKKPLSELAGEMTKFPQLLVNVRVTDKKLALENEKIKEIIRVVEEEMNGDGRILVRPSGTEPLIRVMAEAPTQEVCDAYVHRIVEVVKAEVGAE.

Ser-100 serves as the catalytic Phosphoserine intermediate. The Mg(2+) site is built by Ser-100, Asp-240, Asp-242, and Asp-244. Ser-100 bears the Phosphoserine mark.

This sequence belongs to the phosphohexose mutase family. It depends on Mg(2+) as a cofactor. Post-translationally, activated by phosphorylation.

It carries out the reaction alpha-D-glucosamine 1-phosphate = D-glucosamine 6-phosphate. Its function is as follows. Catalyzes the conversion of glucosamine-6-phosphate to glucosamine-1-phosphate. This is Phosphoglucosamine mutase from Bacillus cereus (strain B4264).